A 348-amino-acid polypeptide reads, in one-letter code: Centromere protein N-B (348 aa).

It belongs to the CENP-N/CHL4 family.

The protein localises to the nucleus. The protein resides in the chromosome. It localises to the centromere. Probable component of a centromeric complex involved in assembly of kinetochore proteins, mitotic progression and chromosome segregation. This chain is Centromere protein N-B (cenpn-b), found in Xenopus laevis (African clawed frog).